Consider the following 459-residue polypeptide: Sulfite oxidase (459 aa).

Residues 4 to 83 form the Cytochrome b5 heme-binding domain; it reads YPRYTREEVG…LQQYKVGELS (80 aa). Residues His-40, His-65, and His-69 each contribute to the heme b site. The tract at residues 83-115 is disordered; it reads SPDEAPAAPDAQDPFAGDPPRHPGLRVNSQKPF. Residues 85 to 100 show a composition bias toward low complexity; sequence DEAPAAPDAQDPFAGD. Positions 86-95 are hinge; it reads EAPAAPDAQD. The moco domain stretch occupies residues 96–323; sequence PFAGDPPRHP…PSRWQQNDYK (228 aa). Mo-molybdopterin contacts are provided by residues 136-140, Cys-185, Asp-244, His-283, Arg-288, and 299-301; these read FTRNH and SVK. Residues 324–459 form a homodimerization region; sequence GFSPCVDWDT…RGVLSTAWHR (136 aa).

Homodimer. The cofactor is heme b. Mo-molybdopterin is required as a cofactor.

Its subcellular location is the mitochondrion intermembrane space. It catalyses the reaction sulfite + O2 + H2O = sulfate + H2O2. Its pathway is energy metabolism; sulfur metabolism. Its function is as follows. Catalyzes the oxidation of sulfite to sulfate, the terminal reaction in the oxidative degradation of sulfur-containing amino acids. The polypeptide is Sulfite oxidase (SUOX) (Gallus gallus (Chicken)).